The primary structure comprises 314 residues: 4-hydroxy-3-methylbut-2-enyl diphosphate reductase (314 aa).

Cys-12 serves as a coordination point for [4Fe-4S] cluster. (2E)-4-hydroxy-3-methylbut-2-enyl diphosphate-binding residues include His-43 and His-81. His-43 and His-81 together coordinate dimethylallyl diphosphate. Residues His-43 and His-81 each coordinate isopentenyl diphosphate. Cys-103 provides a ligand contact to [4Fe-4S] cluster. A (2E)-4-hydroxy-3-methylbut-2-enyl diphosphate-binding site is contributed by His-131. Dimethylallyl diphosphate is bound at residue His-131. Residue His-131 participates in isopentenyl diphosphate binding. Residue Glu-133 is the Proton donor of the active site. Thr-170 contributes to the (2E)-4-hydroxy-3-methylbut-2-enyl diphosphate binding site. Position 198 (Cys-198) interacts with [4Fe-4S] cluster. Positions 226, 228, and 271 each coordinate (2E)-4-hydroxy-3-methylbut-2-enyl diphosphate. Residues Ser-226, Asn-228, and Ser-271 each coordinate dimethylallyl diphosphate. 3 residues coordinate isopentenyl diphosphate: Ser-226, Asn-228, and Ser-271.

This sequence belongs to the IspH family. It depends on [4Fe-4S] cluster as a cofactor.

It catalyses the reaction isopentenyl diphosphate + 2 oxidized [2Fe-2S]-[ferredoxin] + H2O = (2E)-4-hydroxy-3-methylbut-2-enyl diphosphate + 2 reduced [2Fe-2S]-[ferredoxin] + 2 H(+). The enzyme catalyses dimethylallyl diphosphate + 2 oxidized [2Fe-2S]-[ferredoxin] + H2O = (2E)-4-hydroxy-3-methylbut-2-enyl diphosphate + 2 reduced [2Fe-2S]-[ferredoxin] + 2 H(+). It functions in the pathway isoprenoid biosynthesis; dimethylallyl diphosphate biosynthesis; dimethylallyl diphosphate from (2E)-4-hydroxy-3-methylbutenyl diphosphate: step 1/1. It participates in isoprenoid biosynthesis; isopentenyl diphosphate biosynthesis via DXP pathway; isopentenyl diphosphate from 1-deoxy-D-xylulose 5-phosphate: step 6/6. In terms of biological role, catalyzes the conversion of 1-hydroxy-2-methyl-2-(E)-butenyl 4-diphosphate (HMBPP) into a mixture of isopentenyl diphosphate (IPP) and dimethylallyl diphosphate (DMAPP). Acts in the terminal step of the DOXP/MEP pathway for isoprenoid precursor biosynthesis. This is 4-hydroxy-3-methylbut-2-enyl diphosphate reductase from Bacillus licheniformis (strain ATCC 14580 / DSM 13 / JCM 2505 / CCUG 7422 / NBRC 12200 / NCIMB 9375 / NCTC 10341 / NRRL NRS-1264 / Gibson 46).